Consider the following 658-residue polypeptide: Palmitoyltransferase ZDHHC5-B (658 aa).

Residues 1–24 are Cytoplasmic-facing; the sequence is MPVGLSVGGALGDPSPSRPFRPSR. A helical transmembrane segment spans residues 25–45; it reads YVPVSAATAFLVGATTLFLCF. The Extracellular segment spans residues 46-56; it reads TCPWLSEKFSS. Residues 57 to 77 form a helical membrane-spanning segment; the sequence is FIPLYNVVVFLFTLANFCMAT. The Cytoplasmic portion of the chain corresponds to 78 to 159; that stretch reads FMDPGVFPRA…NCIGRRNYRY (82 aa). The 51-residue stretch at 115-165 folds into the DHHC domain; that stretch reads KWCSTCRFYRPPRCSHCSVCDNCVEEFDHHCPWVNNCIGRRNYRYFFLFLL. Catalysis depends on Cys-145, which acts as the S-palmitoyl cysteine intermediate. A helical transmembrane segment spans residues 160–180; it reads FFLFLLSLTVHIMDVFGFSLL. At 181-202 the chain is on the extracellular side; that stretch reads YILHHTKQLDLVQSGVTMAVMC. A helical transmembrane segment spans residues 203-223; it reads VAGLFFVPVAGLTGFHVVLVA. At 224–658 the chain is on the cytoplasmic side; the sequence is RGRTTNEQVT…VGGTTYEISV (435 aa). 3 disordered regions span residues 306–419, 490–522, and 540–658; these read EIME…RSGS, ESLL…LSTA, and QREG…EISV. The segment covering 360 to 398 has biased composition (polar residues); the sequence is PGKNHTASTHSSKMSRGNSMTESPSVPVTTGQPSYRSDP. Residues 407 to 419 show a composition bias toward gly residues; the sequence is GCRGGAEGGRSGS. Residues 565–575 are compositionally biased toward pro residues; it reads SSPPSRAPPLS. Polar residues predominate over residues 619–633; the sequence is SMPNSTIKQNVANHN. Over residues 634–644 the composition is skewed to basic residues; the sequence is THSHKPARGVK.

This sequence belongs to the DHHC palmitoyltransferase family. ERF2/ZDHHC9 subfamily.

The protein localises to the cell membrane. It catalyses the reaction L-cysteinyl-[protein] + hexadecanoyl-CoA = S-hexadecanoyl-L-cysteinyl-[protein] + CoA. Its function is as follows. Palmitoyltransferase that catalyzes the addition of palmitate onto various protein substrates and is involved in a variety of cellular processes. This Danio rerio (Zebrafish) protein is Palmitoyltransferase ZDHHC5-B.